We begin with the raw amino-acid sequence, 530 residues long: Probable serine/threonine-protein kinase fnkB (530 aa).

Residues 11–268 (WEIVETLKSN…SITLIDHPFL (258 aa)) form the Protein kinase domain. ATP-binding positions include 17–25 (LKSNVFKVN) and Lys43. The active-site Proton acceptor is the Asp131.

Belongs to the protein kinase superfamily. STE Ser/Thr protein kinase family. The cofactor is Mg(2+).

It carries out the reaction L-seryl-[protein] + ATP = O-phospho-L-seryl-[protein] + ADP + H(+). The enzyme catalyses L-threonyl-[protein] + ATP = O-phospho-L-threonyl-[protein] + ADP + H(+). The sequence is that of Probable serine/threonine-protein kinase fnkB from Dictyostelium discoideum (Social amoeba).